A 401-amino-acid chain; its full sequence is Phosphoglycerate kinase (401 aa).

Substrate-binding positions include 20–22 (DFN), arginine 35, 58–61 (HLGR), arginine 117, and arginine 154. ATP-binding positions include lysine 204, glycine 298, glutamate 329, and 358-361 (GGDS).

Belongs to the phosphoglycerate kinase family. Monomer.

It is found in the cytoplasm. The enzyme catalyses (2R)-3-phosphoglycerate + ATP = (2R)-3-phospho-glyceroyl phosphate + ADP. The protein operates within carbohydrate degradation; glycolysis; pyruvate from D-glyceraldehyde 3-phosphate: step 2/5. This is Phosphoglycerate kinase from Bifidobacterium adolescentis (strain ATCC 15703 / DSM 20083 / NCTC 11814 / E194a).